A 123-amino-acid polypeptide reads, in one-letter code: Fluoride-specific ion channel FluC (123 aa).

4 consecutive transmembrane segments (helical) span residues 6–26 (VALV…LSGV), 38–58 (LLVN…IFWG), 68–88 (FLGT…YETF), and 100–120 (LLNI…GFVL). Positions 75 and 78 each coordinate Na(+).

This sequence belongs to the fluoride channel Fluc/FEX (TC 1.A.43) family.

It is found in the cell membrane. It carries out the reaction fluoride(in) = fluoride(out). Its activity is regulated as follows. Na(+) is not transported, but it plays an essential structural role and its presence is essential for fluoride channel function. Fluoride-specific ion channel. Important for reducing fluoride concentration in the cell, thus reducing its toxicity. This chain is Fluoride-specific ion channel FluC, found in Pyrococcus furiosus (strain ATCC 43587 / DSM 3638 / JCM 8422 / Vc1).